The sequence spans 344 residues: tRNA N6-adenosine threonylcarbamoyltransferase (344 aa).

Positions 116 and 120 each coordinate Fe cation. Residues 138-142 (LVSGG), Asp-171, Gly-184, Asp-188, and Asn-277 each bind substrate. Fe cation is bound at residue Asp-307.

The protein belongs to the KAE1 / TsaD family. It depends on Fe(2+) as a cofactor.

Its subcellular location is the cytoplasm. The enzyme catalyses L-threonylcarbamoyladenylate + adenosine(37) in tRNA = N(6)-L-threonylcarbamoyladenosine(37) in tRNA + AMP + H(+). Required for the formation of a threonylcarbamoyl group on adenosine at position 37 (t(6)A37) in tRNAs that read codons beginning with adenine. Is involved in the transfer of the threonylcarbamoyl moiety of threonylcarbamoyl-AMP (TC-AMP) to the N6 group of A37, together with TsaE and TsaB. TsaD likely plays a direct catalytic role in this reaction. The sequence is that of tRNA N6-adenosine threonylcarbamoyltransferase from Latilactobacillus sakei subsp. sakei (strain 23K) (Lactobacillus sakei subsp. sakei).